The primary structure comprises 173 residues: Transcriptional repressor NrdR (173 aa).

A zinc finger spans residues 3–34 (CPFCQHADTRVIDSRVSEDGATIRRRRECEAC). The region spanning 49-139 (PAIVKSDGTR…VYRSFEDVAD (91 aa)) is the ATP-cone domain.

It belongs to the NrdR family. Zn(2+) is required as a cofactor.

In terms of biological role, negatively regulates transcription of bacterial ribonucleotide reductase nrd genes and operons by binding to NrdR-boxes. The polypeptide is Transcriptional repressor NrdR (Stenotrophomonas maltophilia (strain R551-3)).